A 479-amino-acid polypeptide reads, in one-letter code: Glycogen synthase (479 aa).

Lys-15 serves as a coordination point for ADP-alpha-D-glucose.

This sequence belongs to the glycosyltransferase 1 family. Bacterial/plant glycogen synthase subfamily.

The catalysed reaction is [(1-&gt;4)-alpha-D-glucosyl](n) + ADP-alpha-D-glucose = [(1-&gt;4)-alpha-D-glucosyl](n+1) + ADP + H(+). Its pathway is glycan biosynthesis; glycogen biosynthesis. Synthesizes alpha-1,4-glucan chains using ADP-glucose. The polypeptide is Glycogen synthase (Histophilus somni (strain 129Pt) (Haemophilus somnus)).